Here is a 157-residue protein sequence, read N- to C-terminus: Putative pre-16S rRNA nuclease (157 aa).

The protein belongs to the YqgF nuclease family.

It is found in the cytoplasm. In terms of biological role, could be a nuclease involved in processing of the 5'-end of pre-16S rRNA. The protein is Putative pre-16S rRNA nuclease of Parasynechococcus marenigrum (strain WH8102).